A 349-amino-acid polypeptide reads, in one-letter code: MSDTMPEIVSPLVAENSQEQEESVLISLDIEEDKLFLLHFIIGTYFGPDLRKQHHRPKQSAFQIQALKNVVVDELSGSLMKRAELERVYYHIIRNVDPSLVMKPKKLREYFNAKRNDSNRDYPLFVDLFPRKLHPETHVRHKFKFIRSIVFINDPDTSCMREECVARFKRLTGLDSFALSLSVDVTKSNGVVAANEVKVEIDESVEPVKEDNAGTCTSGEESDVAAKPEVKSEAHGGLMVGLMDIGECDDAYLFRVSLPGVKRDERYFSCEVEDNGKVLVRGVTTTGGKRVKRYSHVFEMQTRSLCPPGNFSVSFRLPGPVHPHEFSGNFGTDGILEGVVMKNLQKQTV.

Positions 210-230 (EDNAGTCTSGEESDVAAKPEV) are disordered. The sHSP domain occupies 233-349 (EAHGGLMVGL…VMKNLQKQTV (117 aa)).

It belongs to the small heat shock protein (HSP20) family. As to quaternary structure, homodimer or oligomer. May form an 16-mer complex. Interacts with MBD7 (via C-terminus). Interacts with IDM1 (via N-terminus). Interacts with IMD3. Part of a complex made of MBD7, IDM1, IDM2, IDM3 and ROS1. In terms of tissue distribution, expressed in cotyledons and hypocotyls in young seedlings.

It localises to the nucleus. It is found in the nucleoplasm. Prevents DNA hypermethylation and transcriptional silencing of transgenes and of some endogenous genes. May act as a molecular chaperone of IDM1, regulating its H3K18 acetylation activity. This chain is Increased DNA methylation 2, found in Arabidopsis thaliana (Mouse-ear cress).